The following is a 191-amino-acid chain: Protein Ves (191 aa).

This sequence belongs to the Ves family.

In Escherichia coli (strain ATCC 8739 / DSM 1576 / NBRC 3972 / NCIMB 8545 / WDCM 00012 / Crooks), this protein is Protein Ves.